A 100-amino-acid polypeptide reads, in one-letter code: Urease subunit gamma (100 aa).

Belongs to the urease gamma subunit family. As to quaternary structure, heterotrimer of UreA (gamma), UreB (beta) and UreC (alpha) subunits. Three heterotrimers associate to form the active enzyme.

The protein resides in the cytoplasm. It catalyses the reaction urea + 2 H2O + H(+) = hydrogencarbonate + 2 NH4(+). It participates in nitrogen metabolism; urea degradation; CO(2) and NH(3) from urea (urease route): step 1/1. This Magnetococcus marinus (strain ATCC BAA-1437 / JCM 17883 / MC-1) protein is Urease subunit gamma.